The primary structure comprises 124 residues: Small ribosomal subunit protein uS12 (124 aa).

Residue aspartate 89 is modified to 3-methylthioaspartic acid.

Belongs to the universal ribosomal protein uS12 family. As to quaternary structure, part of the 30S ribosomal subunit. Contacts proteins S8 and S17. May interact with IF1 in the 30S initiation complex.

Its function is as follows. With S4 and S5 plays an important role in translational accuracy. In terms of biological role, interacts with and stabilizes bases of the 16S rRNA that are involved in tRNA selection in the A site and with the mRNA backbone. Located at the interface of the 30S and 50S subunits, it traverses the body of the 30S subunit contacting proteins on the other side and probably holding the rRNA structure together. The combined cluster of proteins S8, S12 and S17 appears to hold together the shoulder and platform of the 30S subunit. This is Small ribosomal subunit protein uS12 from Thermoanaerobacter pseudethanolicus (strain ATCC 33223 / 39E) (Clostridium thermohydrosulfuricum).